Reading from the N-terminus, the 603-residue chain is Variable flagella 3 (603 aa).

Residues 169-289 (GGEVSAELRR…TEDLEARDRR (121 aa)) adopt a coiled-coil conformation. The segment covering 288–297 (RRMNSTDRIR) has biased composition (basic and acidic residues). Disordered regions lie at residues 288–526 (RRMN…PARA) and 539–564 (AGRG…SSKS). The segment covering 337 to 348 (SRSNSRGRGTSS) has biased composition (low complexity). Positions 364 to 380 (PRFDPTEYVRQRKERES) are enriched in basic and acidic residues. Positions 397 to 406 (AGTSRASSVV) are enriched in polar residues. Gly residues predominate over residues 486-510 (GASGGGAGGWSKFPGGGGGGVGGSG). The span at 511-520 (QRISSNSPRS) shows a compositional bias: polar residues.

The protein belongs to the CCDC61 family.

Its subcellular location is the cytoplasm. It is found in the cytoskeleton. The protein resides in the flagellum basal body. Required for normal flagella and striated fiber formation. The polypeptide is Variable flagella 3 (Chlamydomonas reinhardtii (Chlamydomonas smithii)).